The following is a 102-amino-acid chain: PqqA binding protein (102 aa).

It belongs to the PqqD family. As to quaternary structure, monomer. Interacts with PqqE.

Its pathway is cofactor biosynthesis; pyrroloquinoline quinone biosynthesis. Functions as a PqqA binding protein and presents PqqA to PqqE, in the pyrroloquinoline quinone (PQQ) biosynthetic pathway. This chain is PqqA binding protein, found in Rhodopseudomonas palustris (strain BisB5).